A 59-amino-acid chain; its full sequence is Large ribosomal subunit protein bL32 (59 aa).

The interval 1 to 59 (MAVQQNKKSPSKRGMHRSHDHLSVAPLAVEPTTGETHLRHHVSPNGYYRGRKVIKTKND) is disordered. 2 stretches are compositionally biased toward basic residues: residues 9–19 (SPSKRGMHRSH) and 49–59 (RGRKVIKTKND).

This sequence belongs to the bacterial ribosomal protein bL32 family.

The protein is Large ribosomal subunit protein bL32 of Cupriavidus metallidurans (strain ATCC 43123 / DSM 2839 / NBRC 102507 / CH34) (Ralstonia metallidurans).